The chain runs to 158 residues: Cathelicidin-6 (158 aa).

Residues 1 to 29 form the signal peptide; sequence METQRASLSLGRWSLWLLLLGLALPSASA. Positions 30 to 131 are excised as a propeptide; sequence QALSYREAVL…NVTCEELQSV (102 aa). 2 disulfides stabilise this stretch: C86-C97 and C108-C125.

The protein belongs to the cathelicidin family.

Its subcellular location is the secreted. In terms of biological role, exerts a potent antimicrobial activity against Gram-negative and Gram-positive bacteria, including methicillin-resistant Staphylococcus aureus, and fungi. This Bos taurus (Bovine) protein is Cathelicidin-6 (CATHL6).